The following is a 462-amino-acid chain: A-type ATP synthase subunit B (462 aa).

Belongs to the ATPase alpha/beta chains family. Has multiple subunits with at least A(3), B(3), C, D, E, F, H, I and proteolipid K(x).

The protein resides in the cell membrane. Functionally, component of the A-type ATP synthase that produces ATP from ADP in the presence of a proton gradient across the membrane. The B chain is a regulatory subunit. The sequence is that of A-type ATP synthase subunit B from Cenarchaeum symbiosum (strain A).